A 424-amino-acid polypeptide reads, in one-letter code: S-phase kinase-associated protein 2 (424 aa).

The segment at 1–220 (MHRKHLQEIP…LSLEGLRLSD (220 aa)) is mediates interaction with hepatitis C virus non-structural protein NS5A. The segment at 39-73 (SALEKEEPDSENIPQELLSNLGHPESPPRKRLKSK) is disordered. Residue Ser-64 is modified to Phosphoserine. Residues 67-73 (RKRLKSK) carry the Nuclear localization signal motif. N6-acetyllysine; by p300/EP300 occurs at positions 68 and 71. A phosphoserine mark is found at Ser-72 and Ser-75. The F-box domain maps to 94 to 140 (GVSWDSLPDELLLGIFSCLCLPELLKVSGVCKRWYRLASDESLWQTL). LRR repeat units lie at residues 151 to 176 (VTGRLLSQGVIAFRCPRSFMDQPLAE), 177 to 204 (HFSPFRVQHMDLSNSVIEVSTLHGILSQ), 210 to 234 (NLSLEGLRLSDPIVNTLAKNSNLVR), 235 to 257 (LNLSGCSGFSEFALQTLLSSCSR), 258 to 284 (LDELNLSWCFDFTEKHVQVAVAHVSET), 286 to 308 (TQLNLSGYRKNLQKSDLSTLVRR), 309 to 330 (CPNLVHLDLSDSVMLKNDCFQE), 334 to 356 (LNYLQHLSLSRCYDIIPETLLEL), 359 to 378 (IPTLKTLQVFGIVPDGTLQL), and 380 to 401 (KEALPHLQINCSHFTTIARPTI). Phosphoserine is present on Ser-179. Residues 402-424 (GNKKNQEIWGIKCRLTLQKPSCL) are mediates interaction with IFI27.

As to quaternary structure, part of a SCF(SKP2) complex consisting of CUL1, RBX1, SKP1 and SKP2. Component of a SCF(SKP2)-like complex containing CUL1, SKP1, TRIM21 and SKP2. Interacts directly with CUL1 and SKP1. Interacts with CKS1. Interacts with ASB2 which is the substrate-recognition component of a probable ECS E3 ubiquitin-protein ligase complex; ASB2 is likely to bridge the formation of dimeric E3-ubiquitin-protein ligase complexes composed of an ECS complex and an SCF(SKP2) complex. Interacts with the cyclin-A-CDK2 complex. Interacts with ORC1, phosphorylated CDT1, phosphorylated RBL2, ELF4, phosphorylated RAG2, FOXO1, UBP43, MYC, TOB1, TAL1 and KMT2A/MLL1. Interacts with TRIM21. Interacts with cyclin-E. Interacts with IFI27; promotes the ubiquitin-mediated proteasomal degradation of hepatitis C virus/HCV non-structural protein NS5A. Interacts with CARM1. (Microbial infection) Interacts with hepatitis C virus/HCV non-structural protein NS5A; promotes the ubiquitin-mediated proteasomal degradation of NS5A. Post-translationally, phosphorylated on serine and threonine resudues in response to DNA damage, promoting 'Lys-63'-linked ubiquitination of NBN. In terms of processing, ubiquitinated by the APC/C complex, leading to its degradation by the proteasome. Deubiquitinated by USP13. Acetylation at Lys-68 and Lys-71 increases stability through impairment of APC/C-mediated proteolysis and promotes cytoplasmic retention. Deacetylated by SIRT3.

It localises to the cytoplasm. The protein localises to the nucleus. Its pathway is protein modification; protein ubiquitination. In terms of biological role, substrate recognition component of a SCF (SKP1-CUL1-F-box protein) E3 ubiquitin-protein ligase complex which mediates the ubiquitination and subsequent proteasomal degradation of target proteins involved in cell cycle progression, signal transduction and transcription. Specifically recognizes phosphorylated CDKN1B/p27kip and is involved in regulation of G1/S transition. Degradation of CDKN1B/p27kip also requires CKS1. Recognizes target proteins ORC1, CDT1, RBL2, KMT2A/MLL1, CDK9, RAG2, NBN, FOXO1, UBP43, YTHDF2, and probably MYC, TOB1 and TAL1. Degradation of TAL1 also requires STUB1. Recognizes CDKN1A in association with CCNE1 or CCNE2 and CDK2. Promotes ubiquitination and destruction of CDH1 in a CK1-dependent manner, thereby regulating cell migration. Following phosphorylation in response to DNA damage, mediates 'Lys-63'-linked ubiquitination of NBN, promoting ATM recruitment to DNA damage sites and DNA repair via homologous recombination. Its function is as follows. Through the ubiquitin-mediated proteasomal degradation of hepatitis C virus non-structural protein 5A, has an antiviral activity towards that virus. The protein is S-phase kinase-associated protein 2 (SKP2) of Homo sapiens (Human).